The sequence spans 410 residues: Cysteine desulfurase IscS (410 aa).

Pyridoxal 5'-phosphate-binding positions include 80–81, Asn160, Gln188, and 208–210; these read AT and SGH. The residue at position 211 (Lys211) is an N6-(pyridoxal phosphate)lysine. Residue Thr248 coordinates pyridoxal 5'-phosphate. Cys334 acts as the Cysteine persulfide intermediate in catalysis. Position 334 (Cys334) interacts with [2Fe-2S] cluster.

Belongs to the class-V pyridoxal-phosphate-dependent aminotransferase family. NifS/IscS subfamily. In terms of assembly, homodimer. Forms a heterotetramer with IscU, interacts with other sulfur acceptors. Requires pyridoxal 5'-phosphate as cofactor.

The protein resides in the cytoplasm. It carries out the reaction (sulfur carrier)-H + L-cysteine = (sulfur carrier)-SH + L-alanine. Its pathway is cofactor biosynthesis; iron-sulfur cluster biosynthesis. Its function is as follows. Master enzyme that delivers sulfur to a number of partners involved in Fe-S cluster assembly, tRNA modification or cofactor biosynthesis. Catalyzes the removal of elemental sulfur atoms from cysteine to produce alanine. Functions as a sulfur delivery protein for Fe-S cluster synthesis onto IscU, an Fe-S scaffold assembly protein, as well as other S acceptor proteins. This chain is Cysteine desulfurase IscS, found in Rickettsia prowazekii (strain Madrid E).